The primary structure comprises 877 residues: Leucine--tRNA ligase (877 aa).

Positions 43-53 (PYPSGRIHMGH) match the 'HIGH' region motif. The short motif at 628-632 (KMSKS) is the 'KMSKS' region element. K631 serves as a coordination point for ATP.

This sequence belongs to the class-I aminoacyl-tRNA synthetase family.

The protein localises to the cytoplasm. It carries out the reaction tRNA(Leu) + L-leucine + ATP = L-leucyl-tRNA(Leu) + AMP + diphosphate. This chain is Leucine--tRNA ligase, found in Brucella abortus biovar 1 (strain 9-941).